A 575-amino-acid chain; its full sequence is DNA mismatch repair protein MutL (575 aa).

It belongs to the DNA mismatch repair MutL/HexB family.

In terms of biological role, this protein is involved in the repair of mismatches in DNA. It is required for dam-dependent methyl-directed DNA mismatch repair. May act as a 'molecular matchmaker', a protein that promotes the formation of a stable complex between two or more DNA-binding proteins in an ATP-dependent manner without itself being part of a final effector complex. In Dictyoglomus thermophilum (strain ATCC 35947 / DSM 3960 / H-6-12), this protein is DNA mismatch repair protein MutL.